The following is a 289-amino-acid chain: BTB/POZ domain-containing protein KCTD7 (289 aa).

The disordered stretch occupies residues 1-42 (MVVVTGREPDSRHSDGAMSSSEAEDDFLEPATPTATQAGHGL). The BTB domain maps to 53-141 (VPLNIGGAHF…YAIGPLLEQL (89 aa)).

As to quaternary structure, interacts with CUL3. High expression in brain, particularly in post-mitotic neurons. Expressed in the mitral cells of the olfactory bulbs, the hippocampus, the deep layers of the cerebral cortex and Purkinje cells of the cerebellum. Not detected in astrocytes or microglial cells. Also expressed in heart, liver, spleen and kidney.

Its subcellular location is the cell membrane. It localises to the cytoplasm. The protein resides in the cytosol. Its function is as follows. May be involved in the control of excitability of cortical neurons. The chain is BTB/POZ domain-containing protein KCTD7 (Kctd7) from Mus musculus (Mouse).